A 418-amino-acid polypeptide reads, in one-letter code: MNIFEELKARGLVFQTTDEEALVKALTEGQVSYYTGYDPTADSLHLGHLVAILTSRRLQLAGHKPYALVGGATGLIGDPSFKDAERSLQTKETVLEWSGKIKGQLSQFLDFENGANKAELVNNYDWFSQISFIDFLRDVGKYFTVNYMMSKDSVKKRIETGISYTEFAYQIMQGYDFYELNQKFNVTLQIGGSDQWGNMTAGTELLRRKADKTGHVMTVPLITDANGKKFGKSEGNAVWLDADKTSPYEMYQFWLNVMDEDAIRFLKIFTFLSLEEIAEIEKAFDAARHERLAQKTLAKEVVTLVHGEEAFKQALNITEQLFAGNIKNLSAAELKQGLSNVPNYQVQDEDNLNIVEILVSSSISPSKRQAREDVQNGAIYLNGERIQDLDYTLTEDDKIDGQLTVIRRGKKKYAVLTY.

L-tyrosine is bound at residue Tyr34. A 'HIGH' region motif is present at residues 39 to 48 (PTADSLHLGH). The L-tyrosine site is built by Tyr169 and Gln173. The short motif at 229-233 (KFGKS) is the 'KMSKS' region element. Residue Lys232 participates in ATP binding. Residues 352-418 (LNIVEILVSS…GKKKYAVLTY (67 aa)) enclose the S4 RNA-binding domain.

This sequence belongs to the class-I aminoacyl-tRNA synthetase family. TyrS type 1 subfamily. As to quaternary structure, homodimer.

The protein resides in the cytoplasm. It catalyses the reaction tRNA(Tyr) + L-tyrosine + ATP = L-tyrosyl-tRNA(Tyr) + AMP + diphosphate + H(+). In terms of biological role, catalyzes the attachment of tyrosine to tRNA(Tyr) in a two-step reaction: tyrosine is first activated by ATP to form Tyr-AMP and then transferred to the acceptor end of tRNA(Tyr). This Streptococcus uberis (strain ATCC BAA-854 / 0140J) protein is Tyrosine--tRNA ligase.